A 410-amino-acid polypeptide reads, in one-letter code: Killer cell immunoglobulin-like receptor 3DL3 (410 aa).

The first 25 residues, 1 to 25 (MSLMVVSMACVGFFLLEGPWPHVGG), serve as a signal peptide directing secretion. Residues 26–322 (QDKPFLSAWP…VSVTGNSRHL (297 aa)) are Extracellular-facing. Ig-like C2-type domains follow at residues 42 to 97 (GQHV…RCCS), 137 to 197 (GETV…RCFG), and 237 to 295 (GENV…RCFG). Cystine bridges form between cysteine 49-cysteine 95 and cysteine 144-cysteine 195. Asparagine 179, asparagine 239, and asparagine 273 each carry an N-linked (GlcNAc...) asparagine glycan. A disulfide bridge links cysteine 244 with cysteine 293. Residues 323–343 (HVLIGTSVVIIPFAILLFFLL) form a helical membrane-spanning segment. The Cytoplasmic portion of the chain corresponds to 344–410 (HRWCANKKNA…PKTPPTDTSV (67 aa)).

The protein belongs to the immunoglobulin superfamily.

Its subcellular location is the cell membrane. Functionally, receptor on natural killer cells. May inhibit the activity of NK cells thus preventing cell lysis. The chain is Killer cell immunoglobulin-like receptor 3DL3 (KIR3DL3) from Homo sapiens (Human).